Here is a 163-residue protein sequence, read N- to C-terminus: Bacterial ISG15-like ubiquitin-like protein BilA (163 aa).

2 consecutive Ubiquitin-like BIL-type domains span residues 4 to 80 (LVVF…RCKR) and 81 to 163 (IRAT…RIEG). Gly-163 participates in a covalent cross-link: Glycyl lysine isopeptide (Gly-Lys) (interchain with K-? in central tail fiber acceptor protein).

Component of the Bil (bacterial ISG15-like) antiviral defense system, composed of BilA, BilB, BilC and BilD. The Bil system specifically conjugates a ubiquitin-like moiety (bilA) to the bacteriophage central tail fiber (CTF, or tip attachment protein J) via reactions involving E1 (bilD) and E2 (bilB). Modifies CTF of phage SECphi27 and SECphi4, which probably interferes with assembly of the phage tail. Also modifies T5 baseplate hub protein pb3 (gene D16), but not gp27 of phage T6 (Bil defends against T6). Bil-encoding bacteria produce mostly defective phage SECphi27, many of which have phage assembly defects, including no tails. SECphi27 phage progeny produced in E.coli with the Bil system inject less DNA into naive host cells, maybe because the phage are less able to adsorb and inject their DNA into host cells. Its function is as follows. Expression of the Bil system in E.coli (strain MG1655) confers about 100-fold resistance to phage SECphi27, SECphi18, SECphi6, SECphi4 and T5, but not to SECphi17. When cells expressing the Bil system are infected by phage SECphi27 at low multiplicity of infection (0.03 MOI) the culture survives, at 3.0 MOI the culture collapses at the same time as cells without the Bil system. This chain is Bacterial ISG15-like ubiquitin-like protein BilA, found in Collimonas sp. (strain OK412).